The chain runs to 176 residues: F(420)H(2) dehydrogenase subunit J (176 aa).

5 consecutive transmembrane segments (helical) span residues 13–33, 39–59, 64–84, 99–119, and 140–160; these read TAVF…VVIA, AGLA…LLNA, VIQV…AVML, PLAF…AFGT, and IGML…IVLL.

This sequence belongs to the complex I subunit 6 family. The FPO complex is composed of at least 13 different subunits. FpoA, FpoH, FpoJ, FpoK, FpoL, FpoM and FpoN proteins constitute the membrane sector of the complex.

The protein resides in the cell membrane. It carries out the reaction methanophenazine + reduced coenzyme F420-(gamma-L-Glu)(n) = dihydromethanophenazine + oxidized coenzyme F420-(gamma-L-Glu)(n) + H(+). Component of the F(420)H(2) dehydrogenase (FPO complex) which is part of the energy-conserving F(420)H(2):heterodisulfide oxidoreductase system. The membrane-bound electron transfer system of the complex plays an important role in the metabolism of methylotrophic methanogens when the organisms grow on methanol or methylamines. Catalyzes the oxidation of methanophenazine to dihydromethanophenazine. It shuttles electrons from F(420)H(2), via FAD and iron-sulfur (Fe-S) centers, to methanophenazine (an electron carrier in the membrane). It couples the redox reaction to proton translocation (for every two electrons transferred, two hydrogen ions are translocated across the cytoplasmic membrane), and thus conserves the redox energy in a proton gradient. It also catalyzes the oxidation of F(420)H(2) with quinones such as 2,3-dimethyl-1,4-naphthoquinone, 2-methyl-1,4-naphthoquinone and tetramethyl-p-benzoquinone. This Methanosarcina mazei (strain ATCC BAA-159 / DSM 3647 / Goe1 / Go1 / JCM 11833 / OCM 88) (Methanosarcina frisia) protein is F(420)H(2) dehydrogenase subunit J (fpoJ).